The sequence spans 601 residues: Dual specificity tyrosine-phosphorylation-regulated kinase 2 (601 aa).

Residues 1 to 24 (MLTRKPSAAAPAAYPTGRGGDSAV) form a disordered region. Ser-30 is modified (phosphoserine). Position 106 is a phosphothreonine; by ATM (Thr-106). Residues 189-191 (KKR) carry the Nuclear localization signal motif. Residues 222 to 535 (YEVLKVIGKG…PGQALRHPWL (314 aa)) enclose the Protein kinase domain. ATP is bound by residues 228-236 (IGKGSFGQV), Lys-251, and 301-304 (FELL). Asp-348 (proton acceptor) is an active-site residue. Phosphothreonine; by MAP3K10 is present on Thr-381. Tyr-382 bears the Phosphotyrosine; by autocatalysis mark. Ser-442 carries the post-translational modification Phosphoserine; by ATM. Position 449 is a phosphoserine; by MAP3K10 (Ser-449).

The protein belongs to the protein kinase superfamily. CMGC Ser/Thr protein kinase family. MNB/DYRK subfamily. Component of an E3 ligase complex containing DYRK2, EDD/UBR5, DDB1 and DCAF1 (EDVP complex). Interacts directly with EDD/UBR5, DDB1 and DCAF1. Interacts with SIAH2 and MDM2. Interacts with MAP3K10 and NFATC1. May also interact with CCNL2. Requires Mg(2+) as cofactor. The cofactor is Mn(2+). Autophosphorylates cotranslationally on the second tyrosine residue in the Tyr-X-Tyr motif in the activation loop, but once mature, does not have any protein tyrosine kinase activity. Phosphorylated at Thr-106 and Ser-442 by ATM in response to genotoxic stress. In terms of processing, under normal conditions, polyubiquitinated in the nucleus by MDM2, leading to its proteasomal degradation. Phosphorylation on Thr-106 and Ser-442 by ATM in response to genotoxic stress disrupts MDM2 binding and prevents MDM2-mediated ubiquitination and subsequent proteasomal degradation. Polyubiquitinated by SIAH2, leading to its proteasomal degradation. Polyubiquitinated by SIAH2 occurs under normal conditions, and is enhanced in response to hypoxia. As to expression, testis, after the onset of spermatogenesis.

The protein resides in the cytoplasm. It localises to the nucleus. It catalyses the reaction L-seryl-[protein] + ATP = O-phospho-L-seryl-[protein] + ADP + H(+). It carries out the reaction L-threonyl-[protein] + ATP = O-phospho-L-threonyl-[protein] + ADP + H(+). The enzyme catalyses L-tyrosyl-[protein] + ATP = O-phospho-L-tyrosyl-[protein] + ADP + H(+). With respect to regulation, activated by autophosphorylation on the second tyrosine residue in the Tyr-X-Tyr motif in the activation loop. Inhibited by acridine analogs, purvalanol, and barely by harmine. Inhibited by leucettine and leucettine derivatives. Serine/threonine-protein kinase involved in the regulation of the mitotic cell cycle, cell proliferation, apoptosis, organization of the cytoskeleton and neurite outgrowth. Functions in part via its role in ubiquitin-dependent proteasomal protein degradation. Functions downstream of ATM and phosphorylates p53/TP53 at 'Ser-46', and thereby contributes to the induction of apoptosis in response to DNA damage. Phosphorylates NFATC1, and thereby inhibits its accumulation in the nucleus and its transcription factor activity. Phosphorylates EIF2B5 at 'Ser-544', enabling its subsequent phosphorylation and inhibition by GSK3B. Likewise, phosphorylation of NFATC1, CRMP2/DPYSL2 and CRMP4/DPYSL3 promotes their subsequent phosphorylation by GSK3B. May play a general role in the priming of GSK3 substrates. Inactivates GYS1 by phosphorylation at 'Ser-641', and potentially also a second phosphorylation site, thus regulating glycogen synthesis. Mediates EDVP E3 ligase complex formation and is required for the phosphorylation and subsequent degradation of KATNA1. Phosphorylates TERT at 'Ser-457', promoting TERT ubiquitination by the EDVP complex. Phosphorylates SIAH2, and thereby increases its ubiquitin ligase activity. Promotes the proteasomal degradation of MYC and JUN, and thereby regulates progress through the mitotic cell cycle and cell proliferation. Promotes proteasomal degradation of GLI2 and GLI3, and thereby plays a role in smoothened and sonic hedgehog signaling. Plays a role in cytoskeleton organization and neurite outgrowth via its phosphorylation of DCX and DPYSL2. Phosphorylates CRMP2/DPYSL2, CRMP4/DPYSL3, DCX, EIF2B5, EIF4EBP1, GLI2, GLI3, GYS1, JUN, MDM2, MYC, NFATC1, p53/TP53, TAU/MAPT and KATNA1. Can phosphorylate histone H1, histone H3 and histone H2B (in vitro). Can phosphorylate CARHSP1 (in vitro). The chain is Dual specificity tyrosine-phosphorylation-regulated kinase 2 (DYRK2) from Homo sapiens (Human).